A 65-amino-acid polypeptide reads, in one-letter code: Small, acid-soluble spore protein Tlp (65 aa).

This sequence belongs to the Tlp family.

Its subcellular location is the spore core. The chain is Small, acid-soluble spore protein Tlp from Bacillus cereus (strain B4264).